A 460-amino-acid chain; its full sequence is Putative E3 ubiquitin-protein ligase RING1b (460 aa).

Residues 1–85 (MPSLKSFSAA…SQSSSAGELS (85 aa)) are disordered. A compositionally biased stretch (basic and acidic residues) spans 21-31 (SEAERFNPEAV). Acidic residues-rich tracts occupy residues 32 to 51 (EKEE…DEED) and 59 to 71 (EAED…EEED). The RING-type zinc finger occupies 103-143 (CSICLGIIRKTRTVMECLHRFCRECIDKSMRLGNNECPTCR). The tract at residues 196 to 300 (QVSQRQSKAL…TEQTHQRDSR (105 aa)) is disordered. A compositionally biased stretch (basic residues) spans 220-234 (RSRRSGGGSRRRRNC). Acidic residues predominate over residues 240–249 (DTSEANDDDD). Over residues 250–265 (QNKRGKDSSSDEPCER) the composition is skewed to basic and acidic residues. A compositionally biased stretch (low complexity) spans 276 to 290 (SSSNANNNDNCAGNG).

Heterodimer with RING1A. Interacts with CLF. Component of the PRC1-like complex, at least composed of RING1A, RING1B and LHP1.

It is found in the nucleus. The catalysed reaction is S-ubiquitinyl-[E2 ubiquitin-conjugating enzyme]-L-cysteine + [acceptor protein]-L-lysine = [E2 ubiquitin-conjugating enzyme]-L-cysteine + N(6)-ubiquitinyl-[acceptor protein]-L-lysine.. It participates in protein modification; protein ubiquitination. Putative E3 ubiquitin-protein ligase that mediates monoubiquitination of 'Lys-119' of histone H2A (H2AK119ub), thereby playing a central role in histone code and gene regulation. In terms of biological role, as part of the PRC1-like complex, repress class I KNOX gene expression. PcG PRC1 complex maintains the transcriptionally repressive state of many genes, including Hox genes, throughout development. PcG PRC1 complex acts via chromatin remodeling and modification of histones, rendering chromatin heritably changed in its expressibility. The sequence is that of Putative E3 ubiquitin-protein ligase RING1b (RING1B) from Arabidopsis thaliana (Mouse-ear cress).